The following is an 89-amino-acid chain: Small ribosomal subunit protein uS15 (89 aa).

Belongs to the universal ribosomal protein uS15 family. As to quaternary structure, part of the 30S ribosomal subunit. Forms a bridge to the 50S subunit in the 70S ribosome, contacting the 23S rRNA.

In terms of biological role, one of the primary rRNA binding proteins, it binds directly to 16S rRNA where it helps nucleate assembly of the platform of the 30S subunit by binding and bridging several RNA helices of the 16S rRNA. Functionally, forms an intersubunit bridge (bridge B4) with the 23S rRNA of the 50S subunit in the ribosome. The polypeptide is Small ribosomal subunit protein uS15 (Mycobacterium bovis (strain ATCC BAA-935 / AF2122/97)).